Reading from the N-terminus, the 497-residue chain is MNDVWQSDWSMMAPEWIVLAAAIALLVMDLALPSDRSRRPLAWGAAAAAALAMIATAAMIPAGSASILHDTFRLDAFAKAFKFILLAGGALALLLVAEWAPKEGSPHRGEFVYMMLFALLGAMMMASSGDLLTLFVSLELLSVSSYILAGLRKTAPASNEAALKYVINGGIATAIMLFGMSYVFGLTGTTNLGGIARRLQETNEPYMLALAFLLLLIGVSFKLATVPFHMWAPDVYEGAPVPATAFFAVVSKTAGFALLLRLLVTIFAAAPSEGRDPSSLLLSMQPIITVLAGLTMIIGSVVALRQRSLKRLLAYSGIAHAGYLLAGFAAMSWAMIDSLWMYLLVYTLMNIGAFAIIAHIVNETGSDDLDGLAGLYRHRPFLAAALGLFLLSLAGIPGTAGFIAKLHIFIGLVVTEPGHYVLAAVMAITTVISYVYYFNLIVQLFFRPTFTAPLGRLPAGLSTAVVLCALGTLAIGWAPGLAYDMLAQFGHFGDFLP.

13 helical membrane passes run 12 to 32 (MAPE…DLAL), 40 to 60 (PLAW…AAMI), 80 to 100 (AFKF…AEWA), 116 to 136 (LFAL…TLFV), 166 to 186 (VING…VFGL), 208 to 228 (LALA…TVPF), 240 to 260 (PVPA…ALLL), 284 to 304 (MQPI…VVAL), 316 to 336 (SGIA…WAMI), 341 to 361 (MYLL…AHIV), 383 to 403 (AAAL…AGFI), 430 to 450 (TVIS…RPTF), and 457 to 477 (LPAG…AIGW).

Belongs to the complex I subunit 2 family. In terms of assembly, NDH-1 is composed of 14 different subunits. Subunits NuoA, H, J, K, L, M, N constitute the membrane sector of the complex.

The protein localises to the cell membrane. It carries out the reaction a quinone + NADH + 5 H(+)(in) = a quinol + NAD(+) + 4 H(+)(out). In terms of biological role, NDH-1 shuttles electrons from NADH, via FMN and iron-sulfur (Fe-S) centers, to quinones in the respiratory chain. The immediate electron acceptor for the enzyme in this species is believed to be a menaquinone. Couples the redox reaction to proton translocation (for every two electrons transferred, four hydrogen ions are translocated across the cytoplasmic membrane), and thus conserves the redox energy in a proton gradient. The protein is NADH-quinone oxidoreductase subunit N of Geobacillus kaustophilus (strain HTA426).